A 464-amino-acid polypeptide reads, in one-letter code: ATP synthase subunit beta 1 (464 aa).

Residue 153–160 (GGAGVGKT) coordinates ATP.

It belongs to the ATPase alpha/beta chains family. F-type ATPases have 2 components, CF(1) - the catalytic core - and CF(0) - the membrane proton channel. CF(1) has five subunits: alpha(3), beta(3), gamma(1), delta(1), epsilon(1). CF(0) has three main subunits: a(1), b(2) and c(9-12). The alpha and beta chains form an alternating ring which encloses part of the gamma chain. CF(1) is attached to CF(0) by a central stalk formed by the gamma and epsilon chains, while a peripheral stalk is formed by the delta and b chains.

It is found in the cell inner membrane. It carries out the reaction ATP + H2O + 4 H(+)(in) = ADP + phosphate + 5 H(+)(out). In terms of biological role, produces ATP from ADP in the presence of a proton gradient across the membrane. The catalytic sites are hosted primarily by the beta subunits. The sequence is that of ATP synthase subunit beta 1 from Burkholderia mallei (strain SAVP1).